The sequence spans 75 residues: UPF0270 protein PputGB1_1339 (75 aa).

Belongs to the UPF0270 family.

This is UPF0270 protein PputGB1_1339 from Pseudomonas putida (strain GB-1).